A 184-amino-acid polypeptide reads, in one-letter code: uncharacterized protein (184 aa).

The tract at residues M1–S24 is disordered.

This is an uncharacterized protein from Dictyostelium discoideum (Social amoeba).